Here is a 95-residue protein sequence, read N- to C-terminus: Small ribosomal subunit protein bS6 (95 aa).

The protein belongs to the bacterial ribosomal protein bS6 family.

Functionally, binds together with bS18 to 16S ribosomal RNA. This chain is Small ribosomal subunit protein bS6, found in Corynebacterium efficiens (strain DSM 44549 / YS-314 / AJ 12310 / JCM 11189 / NBRC 100395).